Consider the following 363-residue polypeptide: Protein TAX-1 (363 aa).

The segment at 129–363 (RYGNAEEILS…IPFRGVAAEQ (235 aa)) is required for localization to the flagellum and for flagellar motility. 2 TPR repeats span residues 157–190 (AELH…LSVM) and 199–232 (TFAY…WLKH).

Interacts with TTC29.

Its subcellular location is the cytoplasm. The protein localises to the cytoskeleton. The protein resides in the flagellum axoneme. In terms of biological role, required for flagellum motility. This Trypanosoma brucei brucei (strain 927/4 GUTat10.1) protein is Protein TAX-1.